The primary structure comprises 1507 residues: Lhr helicase/ probable uracil glycosylase (1507 aa).

The interval 1–856 (MTTNGADPLG…ASLLFGYVGA (856 aa)) is lhr-Core. 4 residues coordinate ATP: Phe24, Gln31, Lys54, and Thr55. The 192-residue stretch at 35–226 (WSAISEGNNT…FLSGQAPTTI (192 aa)) folds into the Helicase ATP-binding domain. Arg122, Arg131, Thr145, Ser148, and Met152 together coordinate ssDNA. ATP contacts are provided by Asp170 and Glu171. The short motif at 170–173 (DEVH) is the DEAH box element. SsDNA-binding residues include Ser253, Trp255, and Arg279. Positions 257–451 (DVEERIVDLV…VLAQHTVAVA (195 aa)) constitute a Helicase C-terminal domain. ATP-binding residues include Ile377, Arg394, and His397. SsDNA contacts are provided by Lys410, Gln518, Arg519, Ile528, Trp597, Asp600, and Arg777. The interval 436–529 (PANPLDVLAQ…LAVTSGGAIP (94 aa)) is WH domain. Residues 530–856 (DRGMFTVYLA…ASLLFGYVGA (327 aa)) are domain 4. The segment at 857–1507 (FMYEGDSPLA…SRTPRGLRLR (651 aa)) is CTD.

It belongs to the Lhr helicase family. In terms of assembly, monomer. Homooligomerizes, possibly a homotetramer. The cofactor is Ca(2+).

It carries out the reaction Couples ATP hydrolysis with the unwinding of duplex DNA by translocating in the 3'-5' direction.. It catalyses the reaction ATP + H2O = ADP + phosphate + H(+). The catalysed reaction is Hydrolyzes single-stranded DNA or mismatched double-stranded DNA and polynucleotides, releasing free uracil.. Functionally, a 3'-5' helicase involved in repair of at least 3 types of DNA cross-links, mitomycin C (MMC), cisplatin, and psoralen-UVA. Translocates 3'-to-5' on single-stranded (ss)DNA, unwinding any encountered duplex nucleic acid. A 3'-ssDNA loading strand of at least 15 nucleotides is required for helicase activity. An RNA:DNA hybrid with a 3'-ssDNA loading strand is an 8-fold better helicase substrate than 3'-tailed double-stranded (ds)DNA; substrates where the helicase loads on a 3'-ssRNA tail (DNA:RNA and RNA:RNA) are not unwound. Only (d)ATP is hydrolyzed by the protein, which has no ATPase activity in the absence of ssDNA or ssRNA. Arg-279 and Trp-597 are needed to couple ATP hydrolysis to mechanical work; a salt bridge between Arg-280 and Glu-550 closes a clamp around the ssDNA that is not large enough for dsDNA, while Ile-528 wedges between bases of the loading strand. Excises uracil residues from ssDNA. Uracil residues in DNA can arise as a result of misincorporation of dUMP residues by DNA polymerase or due to deamination of cytosine. This chain is Lhr helicase/ probable uracil glycosylase, found in Mycolicibacterium smegmatis (strain ATCC 700084 / mc(2)155) (Mycobacterium smegmatis).